A 648-amino-acid polypeptide reads, in one-letter code: Threonine--tRNA ligase (648 aa).

A TGS domain is found at 1 to 61 (MINITFPDGA…TEDGSIEIVT (61 aa)). The catalytic stretch occupies residues 242–540 (DHRKLGKELD…LIENYKGAFP (299 aa)). Positions 336, 387, and 517 each coordinate Zn(2+).

It belongs to the class-II aminoacyl-tRNA synthetase family. As to quaternary structure, homodimer. Zn(2+) serves as cofactor.

Its subcellular location is the cytoplasm. The enzyme catalyses tRNA(Thr) + L-threonine + ATP = L-threonyl-tRNA(Thr) + AMP + diphosphate + H(+). Its function is as follows. Catalyzes the attachment of threonine to tRNA(Thr) in a two-step reaction: L-threonine is first activated by ATP to form Thr-AMP and then transferred to the acceptor end of tRNA(Thr). Also edits incorrectly charged L-seryl-tRNA(Thr). The protein is Threonine--tRNA ligase of Streptococcus thermophilus (strain ATCC BAA-250 / LMG 18311).